The primary structure comprises 199 residues: Recombination protein RecR (199 aa).

Residues 57–72 form a C4-type zinc finger; it reads CSICGNITEDDPCVIC. In terms of domain architecture, Toprim spans 80-176; the sequence is STVLVVEEAK…KVTRLAHGLS (97 aa).

The protein belongs to the RecR family.

Functionally, may play a role in DNA repair. It seems to be involved in an RecBC-independent recombinational process of DNA repair. It may act with RecF and RecO. In Lactiplantibacillus plantarum (strain ATCC BAA-793 / NCIMB 8826 / WCFS1) (Lactobacillus plantarum), this protein is Recombination protein RecR.